A 506-amino-acid polypeptide reads, in one-letter code: Anaerobic nitric oxide reductase transcription regulator NorR (506 aa).

Residue Asp57 is modified to 4-aspartylphosphate. In terms of domain architecture, Sigma-54 factor interaction spans 187–416 (MIGLSPAMTQ…LEHAIHRAVV (230 aa)). Residues 215-222 (GETGTGKE) and 278-287 (ADNGTLFLDE) each bind ATP. Residues 481–500 (WAASARALETDVANLHRLAK) constitute a DNA-binding region (H-T-H motif).

Its pathway is nitrogen metabolism; nitric oxide reduction. Functionally, required for the expression of anaerobic nitric oxide (NO) reductase, acts as a transcriptional activator for at least the norVW operon. Activation also requires sigma-54. In Salmonella heidelberg (strain SL476), this protein is Anaerobic nitric oxide reductase transcription regulator NorR.